A 159-amino-acid chain; its full sequence is MSDRIYLTRDGYNRLKEELHLLMTETRKEVLEKIAEARSHGDLSENAEYDAAREEQSQLEAKIGEIENKLASATILDPKQIKTDRVYILTSVKLRNLDAEDEIIEYTLVSSEEADSDLGKISVRSPVGRSLIGKSVGDKVTISVPKGELHYEILDIFVK.

Residues 43–75 (LSENAEYDAAREEQSQLEAKIGEIENKLASATI) are a coiled coil.

This sequence belongs to the GreA/GreB family.

Its function is as follows. Necessary for efficient RNA polymerase transcription elongation past template-encoded arresting sites. The arresting sites in DNA have the property of trapping a certain fraction of elongating RNA polymerases that pass through, resulting in locked ternary complexes. Cleavage of the nascent transcript by cleavage factors such as GreA or GreB allows the resumption of elongation from the new 3'terminus. GreA releases sequences of 2 to 3 nucleotides. The protein is Transcription elongation factor GreA of Chlorobaculum tepidum (strain ATCC 49652 / DSM 12025 / NBRC 103806 / TLS) (Chlorobium tepidum).